Here is a 158-residue protein sequence, read N- to C-terminus: Small ribosomal subunit protein uS7 (158 aa).

This sequence belongs to the universal ribosomal protein uS7 family. As to quaternary structure, part of the 30S ribosomal subunit. Contacts proteins S9 and S11.

Its function is as follows. One of the primary rRNA binding proteins, it binds directly to 16S rRNA where it nucleates assembly of the head domain of the 30S subunit. Is located at the subunit interface close to the decoding center, probably blocks exit of the E-site tRNA. This Porphyromonas gingivalis (strain ATCC 33277 / DSM 20709 / CIP 103683 / JCM 12257 / NCTC 11834 / 2561) protein is Small ribosomal subunit protein uS7.